Consider the following 337-residue polypeptide: S-adenosylmethionine:tRNA ribosyltransferase-isomerase (337 aa).

This sequence belongs to the QueA family. Monomer.

The protein resides in the cytoplasm. It catalyses the reaction 7-aminomethyl-7-carbaguanosine(34) in tRNA + S-adenosyl-L-methionine = epoxyqueuosine(34) in tRNA + adenine + L-methionine + 2 H(+). Its pathway is tRNA modification; tRNA-queuosine biosynthesis. Functionally, transfers and isomerizes the ribose moiety from AdoMet to the 7-aminomethyl group of 7-deazaguanine (preQ1-tRNA) to give epoxyqueuosine (oQ-tRNA). The sequence is that of S-adenosylmethionine:tRNA ribosyltransferase-isomerase from Legionella pneumophila (strain Paris).